Reading from the N-terminus, the 248-residue chain is 3-deoxy-manno-octulosonate cytidylyltransferase (248 aa).

This sequence belongs to the KdsB family.

It localises to the cytoplasm. It catalyses the reaction 3-deoxy-alpha-D-manno-oct-2-ulosonate + CTP = CMP-3-deoxy-beta-D-manno-octulosonate + diphosphate. Its pathway is nucleotide-sugar biosynthesis; CMP-3-deoxy-D-manno-octulosonate biosynthesis; CMP-3-deoxy-D-manno-octulosonate from 3-deoxy-D-manno-octulosonate and CTP: step 1/1. It participates in bacterial outer membrane biogenesis; lipopolysaccharide biosynthesis. Functionally, activates KDO (a required 8-carbon sugar) for incorporation into bacterial lipopolysaccharide in Gram-negative bacteria. The protein is 3-deoxy-manno-octulosonate cytidylyltransferase of Alteromonas mediterranea (strain DSM 17117 / CIP 110805 / LMG 28347 / Deep ecotype).